Consider the following 411-residue polypeptide: Zinc finger protein draculin (411 aa).

A disordered region spans residues 1–33 (MKNTTKPCRTEHHNAEGQRDRMEGNKKGETKAK). A compositionally biased stretch (basic and acidic residues) spans 8-32 (CRTEHHNAEGQRDRMEGNKKGETKA). 13 consecutive C2H2-type zinc fingers follow at residues 36–58 (VACS…MRVH), 64–86 (YRCD…LDIH), 92–114 (YTCD…MTLH), 120–142 (YKCD…MKLH), 148–170 (HKCE…LMVH), 176–198 (YTCD…MNIH), 204–226 (YTCD…MRFH), 232–254 (FTCD…MKIH), 260–282 (YTCD…MTHH), 288–310 (FHCD…IKTH), 316–338 (YSCL…EKRH), 344–366 (FMCF…LPVH), and 372–394 (YMCS…EKTH).

Specifically expressed in the hematopoietic lineage during embryogenesis; first expressed at the late blastula stage around the blastoderm margin. During gastrulation, restricted to the ventral mesoderm, the presumptive prechordal plate and the dorso-marginal cells of the organizer. At the 3-somite stage, strongly expressed in a caudal domain (marking the erythroid lineage) and a cephalic domain of the lateral mesoderm. At the 8- to 10-somite stage, caudal expression is in two bands of lateral mesoderm which later converge at the midline. Anterior expression is also in two bands of lateral mesoderm which converge as two patches at the midline by the 15-somite stage, with increased scattering of single cells (macrophage precursors) away from the midline to the yolksac. Once at the yolksac, expression is lost. By 20-24 hours post-fertilization (hpf), expressed in proerythroblasts in the erythroid blood island centered above the uro-genital opening. Expression persists in circulating erythroblasts but is lost in mature erythrocytes.

This Danio rerio (Zebrafish) protein is Zinc finger protein draculin.